The sequence spans 247 residues: 3-deoxy-manno-octulosonate cytidylyltransferase (247 aa).

It belongs to the KdsB family.

The protein resides in the cytoplasm. It catalyses the reaction 3-deoxy-alpha-D-manno-oct-2-ulosonate + CTP = CMP-3-deoxy-beta-D-manno-octulosonate + diphosphate. The protein operates within nucleotide-sugar biosynthesis; CMP-3-deoxy-D-manno-octulosonate biosynthesis; CMP-3-deoxy-D-manno-octulosonate from 3-deoxy-D-manno-octulosonate and CTP: step 1/1. It functions in the pathway bacterial outer membrane biogenesis; lipopolysaccharide biosynthesis. Its function is as follows. Activates KDO (a required 8-carbon sugar) for incorporation into bacterial lipopolysaccharide in Gram-negative bacteria. This chain is 3-deoxy-manno-octulosonate cytidylyltransferase, found in Methylorubrum extorquens (strain CM4 / NCIMB 13688) (Methylobacterium extorquens).